A 339-amino-acid polypeptide reads, in one-letter code: Lymphocyte-specific protein 1 (339 aa).

Positions 1 to 198 (MAEASSDPGA…SPPLSPTTKL (198 aa)) are disordered. Residue serine 24 is modified to Phosphoserine. Composition is skewed to basic and acidic residues over residues 32–43 (VHEQCQHERDRQ) and 51–61 (GGGHVPERPKQ). Position 111 is a phosphoserine (serine 111). The span at 117–140 (EDRPGLHAYEKEDSDEVHLEELSL) shows a compositional bias: basic and acidic residues. Phosphothreonine is present on threonine 175. A phosphoserine mark is found at serine 177, serine 188, serine 189, and serine 193. Residues 185 to 196 (IEQSSPPLSPTT) are compositionally biased toward polar residues. Position 252 is a phosphoserine; by MAPKAPK2 (serine 252). The disordered stretch occupies residues 294-315 (KSLWEQKGGSKTSSTIKSTPSG). Over residues 300–315 (KGGSKTSSTIKSTPSG) the composition is skewed to low complexity. N6-acetyllysine is present on lysine 327.

Binds actin. Post-translationally, phosphorylated by casein kinase II, protein kinase C and MAPKAPK2. Phosphorylation by PKC induces translocation from membrane to cytoplasm. Phosphorylation by MAPKAPK2 may regulate neutrophil chemotaxis. As to expression, activated T-lymphocytes.

The protein localises to the cell membrane. Functionally, may play a role in mediating neutrophil activation and chemotaxis. The protein is Lymphocyte-specific protein 1 (LSP1) of Homo sapiens (Human).